Consider the following 101-residue polypeptide: MISLSHFLVLGGVLFAIAVLGIFLNRKNVIVLLMAIELMLLAVNMNFIAFSHYLGDVHGQVFVFFILTVAAAESAIGLAILVLLFRNLRTINVDDLDQLKG.

The next 3 helical transmembrane spans lie at 4–24 (LSHFLVLGGVLFAIAVLGIFL), 30–50 (IVLLMAIELMLLAVNMNFIAF), and 61–81 (VFVFFILTVAAAESAIGLAIL).

Belongs to the complex I subunit 4L family. In terms of assembly, NDH-1 is composed of 14 different subunits. Subunits NuoA, H, J, K, L, M, N constitute the membrane sector of the complex.

It localises to the cell inner membrane. It carries out the reaction a quinone + NADH + 5 H(+)(in) = a quinol + NAD(+) + 4 H(+)(out). NDH-1 shuttles electrons from NADH, via FMN and iron-sulfur (Fe-S) centers, to quinones in the respiratory chain. The immediate electron acceptor for the enzyme in this species is believed to be ubiquinone. Couples the redox reaction to proton translocation (for every two electrons transferred, four hydrogen ions are translocated across the cytoplasmic membrane), and thus conserves the redox energy in a proton gradient. This Thiobacillus denitrificans (strain ATCC 25259 / T1) protein is NADH-quinone oxidoreductase subunit K.